The chain runs to 348 residues: Sulfate/thiosulfate import ATP-binding protein CysA (348 aa).

Residues 3–237 (IEIRNITKSF…PATPFVCQFI (235 aa)) enclose the ABC transporter domain. 35–42 (GPSGCGKT) contacts ATP.

The protein belongs to the ABC transporter superfamily. Sulfate/tungstate importer (TC 3.A.1.6) family. The complex is composed of two ATP-binding proteins (CysA), two transmembrane proteins (CysT and CysW) and a solute-binding protein (CysP).

The protein localises to the cell inner membrane. The enzyme catalyses sulfate(out) + ATP + H2O = sulfate(in) + ADP + phosphate + H(+). It catalyses the reaction thiosulfate(out) + ATP + H2O = thiosulfate(in) + ADP + phosphate + H(+). Its function is as follows. Part of the ABC transporter complex CysAWTP involved in sulfate/thiosulfate import. Responsible for energy coupling to the transport system. The chain is Sulfate/thiosulfate import ATP-binding protein CysA from Methylococcus capsulatus (strain ATCC 33009 / NCIMB 11132 / Bath).